The sequence spans 214 residues: MLDREGFRPNVGIILLNARNEVFWGKRLREHSWQFPQGGIKYGETPMQAMYRELHEETGLHPEHVKIIGRTRDWLRYEVPDKFIKREVRGHYRGQKQIWFLLRMVGRDCDICLRATDHPEFDAWRWNEYWVPLDAVIEFKRDVYQLALTELSRFLRRPAQRAEKPRGPRVSRYPRVIGAQAQTLTIVDASVVCSEIEVEASTLDEMPPRVIVGK.

Residues 6-149 (GFRPNVGIIL…KRDVYQLALT (144 aa)) form the Nudix hydrolase domain. Residues 38 to 59 (GGIKYGETPMQAMYRELHEETG) carry the Nudix box motif.

The protein belongs to the Nudix hydrolase family. RppH subfamily. A divalent metal cation is required as a cofactor.

Functionally, accelerates the degradation of transcripts by removing pyrophosphate from the 5'-end of triphosphorylated RNA, leading to a more labile monophosphorylated state that can stimulate subsequent ribonuclease cleavage. This chain is RNA pyrophosphohydrolase, found in Burkholderia cenocepacia (strain ATCC BAA-245 / DSM 16553 / LMG 16656 / NCTC 13227 / J2315 / CF5610) (Burkholderia cepacia (strain J2315)).